Here is an 806-residue protein sequence, read N- to C-terminus: Xylosyltransferase sqv-6 (806 aa).

Topologically, residues 1–11 are cytoplasmic; the sequence is MLFNGTTKYRD. A helical; Signal-anchor for type II membrane protein membrane pass occupies residues 12–32; sequence YAIVISLFFLLNVYLLYNTAQ. At 33–806 the chain is on the lumenal side; that stretch reads HTQVGNSKHI…GYDEDTQTLI (774 aa). A disulfide bridge connects residues Cys-57 and Cys-85. N-linked (GlcNAc...) asparagine glycans are attached at residues Asn-89 and Asn-169. 3 disulfides stabilise this stretch: Cys-101–Cys-445, Cys-464–Cys-478, and Cys-466–Cys-476. In terms of domain architecture, WSC spans 109–205; that stretch reads IDQRIGCFLD…FNAVEIFRTG (97 aa). Residues Asp-264 and 293-295 contribute to the UDP-alpha-D-xylose site; that span reads TIW. Asn-325 is a glycosylation site (N-linked (GlcNAc...) asparagine). 398-399 is a UDP-alpha-D-xylose binding site; sequence DW. Residues Ser-479 and 505 to 506 each bind UDP-alpha-D-xylose; that span reads RK. Residues Asn-614, Asn-655, and Asn-719 are each glycosylated (N-linked (GlcNAc...) asparagine). A disulfide bond links Cys-772 and Cys-778.

It belongs to the glycosyltransferase 14 family. XylT subfamily. A divalent metal cation is required as a cofactor.

It localises to the endoplasmic reticulum membrane. The protein localises to the golgi apparatus membrane. It carries out the reaction UDP-alpha-D-xylose + L-seryl-[protein] = 3-O-(beta-D-xylosyl)-L-seryl-[protein] + UDP + H(+). The protein operates within glycan metabolism; chondroitin sulfate biosynthesis. Its pathway is glycan metabolism; heparan sulfate biosynthesis. Its function is as follows. Catalyzes the first step in biosynthesis of glycosaminoglycan. Transfers D-xylose from UDP-D-xylose to specific serine residues of the core protein. Required for vulval morphogenesis and zygotic cytokinesis, suggesting that glycosaminoglycans play a central role in vulval morphogenesis. This is Xylosyltransferase sqv-6 from Caenorhabditis elegans.